Consider the following 367-residue polypeptide: Peptide chain release factor 1 (367 aa).

Q238 is modified (N5-methylglutamine).

Belongs to the prokaryotic/mitochondrial release factor family. In terms of processing, methylated by PrmC. Methylation increases the termination efficiency of RF1.

It localises to the cytoplasm. Functionally, peptide chain release factor 1 directs the termination of translation in response to the peptide chain termination codons UAG and UAA. In Dictyoglomus turgidum (strain DSM 6724 / Z-1310), this protein is Peptide chain release factor 1.